The following is a 545-amino-acid chain: Bifunctional purine biosynthesis protein PurH (545 aa).

One can recognise an MGS-like domain in the interval 1-150 (MTNTNRPIRR…KNHATVAIVT (150 aa)).

It belongs to the PurH family.

It carries out the reaction (6R)-10-formyltetrahydrofolate + 5-amino-1-(5-phospho-beta-D-ribosyl)imidazole-4-carboxamide = 5-formamido-1-(5-phospho-D-ribosyl)imidazole-4-carboxamide + (6S)-5,6,7,8-tetrahydrofolate. It catalyses the reaction IMP + H2O = 5-formamido-1-(5-phospho-D-ribosyl)imidazole-4-carboxamide. It functions in the pathway purine metabolism; IMP biosynthesis via de novo pathway; 5-formamido-1-(5-phospho-D-ribosyl)imidazole-4-carboxamide from 5-amino-1-(5-phospho-D-ribosyl)imidazole-4-carboxamide (10-formyl THF route): step 1/1. The protein operates within purine metabolism; IMP biosynthesis via de novo pathway; IMP from 5-formamido-1-(5-phospho-D-ribosyl)imidazole-4-carboxamide: step 1/1. This is Bifunctional purine biosynthesis protein PurH from Bifidobacterium longum (strain DJO10A).